The following is a 293-amino-acid chain: Acetyl-coenzyme A carboxylase carboxyl transferase subunit beta (293 aa).

One can recognise a CoA carboxyltransferase N-terminal domain in the interval 29–293; the sequence is LWSKCPECGL…GCRPMEITSA (265 aa). Residues Cys-33, Cys-36, Cys-52, and Cys-55 each coordinate Zn(2+). The segment at 33–55 adopts a C4-type zinc-finger fold; the sequence is CPECGLVVYVKDLKGNASVCAGC.

This sequence belongs to the AccD/PCCB family. In terms of assembly, acetyl-CoA carboxylase is a heterohexamer composed of biotin carboxyl carrier protein (AccB), biotin carboxylase (AccC) and two subunits each of ACCase subunit alpha (AccA) and ACCase subunit beta (AccD). The cofactor is Zn(2+).

It localises to the cytoplasm. It carries out the reaction N(6)-carboxybiotinyl-L-lysyl-[protein] + acetyl-CoA = N(6)-biotinyl-L-lysyl-[protein] + malonyl-CoA. The protein operates within lipid metabolism; malonyl-CoA biosynthesis; malonyl-CoA from acetyl-CoA: step 1/1. Functionally, component of the acetyl coenzyme A carboxylase (ACC) complex. Biotin carboxylase (BC) catalyzes the carboxylation of biotin on its carrier protein (BCCP) and then the CO(2) group is transferred by the transcarboxylase to acetyl-CoA to form malonyl-CoA. This Parasynechococcus marenigrum (strain WH8102) protein is Acetyl-coenzyme A carboxylase carboxyl transferase subunit beta.